The following is a 122-amino-acid chain: MTKLSRKLQTQKRHRRLRRFLIGDATRPRLSVFRSNNHIYAQVIDDSAQTTICSASTVDKELREKSEKLPSDCNSSSIVGKLLAKRAIKKGIKQVIFDRGGNLYHGRVKALADAAREAGLEF.

The protein belongs to the universal ribosomal protein uL18 family. In terms of assembly, part of the 50S ribosomal subunit; part of the 5S rRNA/L5/L18/L25 subcomplex. Contacts the 5S and 23S rRNAs.

Its function is as follows. This is one of the proteins that bind and probably mediate the attachment of the 5S RNA into the large ribosomal subunit, where it forms part of the central protuberance. This is Large ribosomal subunit protein uL18 from Prochlorococcus marinus (strain MIT 9301).